Reading from the N-terminus, the 485-residue chain is NADH-quinone oxidoreductase subunit N (485 aa).

The next 14 helical transmembrane spans lie at 8-28 (LIALLPLLIVGLTVVVVMLSI), 35-55 (FLNATLSVIGLNAALVSLWFV), 71-91 (GFAMLYTGLVLLASLATCTFA), 105-125 (FYLLVLIAALGGILLANANHL), 127-147 (SLFLGIELISLPLFGLVGYAF), 159-179 (YTILSAAASSFLLFGMALVYA), 203-223 (LLAGFGMMIVGLGFKLSLVPF), 235-255 (PAPVSTFLATASKIAIFGVVM), 271-291 (VVLAIIAFASIIFGNLMALSQ), 297-317 (LLGYSSISHLGYLLVALIALQ), 326-346 (VGVYLAGYLFSSLGAFGVVSL), 373-393 (AAVMTVMMLSLAGIPMTLGFI), 408-430 (WWLVGAVVVGSAIGLYYYLRVAV), and 455-475 (IVVLISALLVLVLGVWPQPLI).

The protein belongs to the complex I subunit 2 family. In terms of assembly, NDH-1 is composed of 13 different subunits. Subunits NuoA, H, J, K, L, M, N constitute the membrane sector of the complex.

The protein resides in the cell inner membrane. The enzyme catalyses a quinone + NADH + 5 H(+)(in) = a quinol + NAD(+) + 4 H(+)(out). NDH-1 shuttles electrons from NADH, via FMN and iron-sulfur (Fe-S) centers, to quinones in the respiratory chain. The immediate electron acceptor for the enzyme in this species is believed to be ubiquinone. Couples the redox reaction to proton translocation (for every two electrons transferred, four hydrogen ions are translocated across the cytoplasmic membrane), and thus conserves the redox energy in a proton gradient. The polypeptide is NADH-quinone oxidoreductase subunit N (Shigella flexneri).